We begin with the raw amino-acid sequence, 388 residues long: Alcohol dehydrogenase patD (388 aa).

Residue cysteine 46 coordinates Zn(2+). Histidine 47 is an NAD(+) binding site. The Zn(2+) site is built by histidine 67, glutamate 68, cysteine 101, cysteine 104, and cysteine 112. Residue histidine 67 coordinates substrate. Residues 198–203, 295–297, and 320–322 each bind NAD(+); these read VALSRG, SLL, and EEA.

The protein belongs to the zinc-containing alcohol dehydrogenase family. Zn(2+) serves as cofactor.

The protein localises to the cytoplasm. The protein resides in the cytosol. It catalyses the reaction neopatulin + NADPH + H(+) = (E)-ascladiol + NADP(+). It functions in the pathway mycotoxin biosynthesis; patulin biosynthesis. Alcohol dehydrogenase; part of the gene cluster that mediates the biosynthesis of patulin, an acetate-derived tetraketide mycotoxin produced by several fungal species that shows antimicrobial properties against several bacteria. PatD catalyzes the conversion of neopatulin into E-ascladiol. The pathway begins with the synthesis of 6-methylsalicylic acid by the polyketide synthase (PKS) patK via condensation of acetate and malonate units. The 6-methylsalicylic acid decarboxylase patG then catalyzes the decarboxylation of 6-methylsalicylic acid to yield m-cresol (also known as 3-methylphenol). These first reactions occur in the cytosol. The intermediate m-cresol is then transported into the endoplasmic reticulum where the cytochrome P450 monooxygenase patH converts it to m-hydroxybenzyl alcohol, which is further converted to gentisyl alcohol by the cytochrome P450 monooxygenase patI. The oxidoreductases patJ and patO further convert gentisyl alcohol to isoepoxydon in the vacuole. PatN catalyzes then the transformation of isoepoxydon into phyllostine. The cluster protein patF is responsible for the conversion from phyllostine to neopatulin whereas the alcohol dehydrogenase patD converts neopatulin to E-ascladiol. The steps between isoepoxydon and E-ascladiol occur in the cytosol, and E-ascladiol is probably secreted to the extracellular space by one of the cluster-specific transporters patC or patM. Finally, the secreted patulin synthase patE catalyzes the conversion of E-ascladiol to patulin. In Aspergillus clavatus (strain ATCC 1007 / CBS 513.65 / DSM 816 / NCTC 3887 / NRRL 1 / QM 1276 / 107), this protein is Alcohol dehydrogenase patD.